The chain runs to 210 residues: Homeobox protein Rhox5 (210 aa).

The disordered stretch occupies residues 1–119; the sequence is MEAEGSSRKV…GNPGGRQMPL (119 aa). The span at 17–30 shows a compositional bias: basic and acidic residues; the sequence is GVKEDSEEQHDVKA. Gly residues predominate over residues 47-79; that stretch reads GQPGVGAVGTEGEGEELNGGKGHFGPGAPGPMG. The segment at residues 117–175 is a DNA-binding region (homeobox; atypical); the sequence is MPLQGSRFAQHRLRELESILQRTNSFDVPREDLDRLMDACVSRVQNWFKIRRAAARRTR.

Its subcellular location is the nucleus. Transcription factor required for differentiation of embryonic stem cells (ESCs) into primordial germ cells. This is Homeobox protein Rhox5 (Rhox5) from Mus musculus (Mouse).